We begin with the raw amino-acid sequence, 379 residues long: UDP-4-amino-4-deoxy-L-arabinose--oxoglutarate aminotransferase (379 aa).

Lys-183 bears the N6-(pyridoxal phosphate)lysine mark.

Belongs to the DegT/DnrJ/EryC1 family. ArnB subfamily. Homodimer. Pyridoxal 5'-phosphate serves as cofactor.

It carries out the reaction UDP-4-amino-4-deoxy-beta-L-arabinose + 2-oxoglutarate = UDP-beta-L-threo-pentopyranos-4-ulose + L-glutamate. Its pathway is nucleotide-sugar biosynthesis; UDP-4-deoxy-4-formamido-beta-L-arabinose biosynthesis; UDP-4-deoxy-4-formamido-beta-L-arabinose from UDP-alpha-D-glucuronate: step 2/3. It participates in bacterial outer membrane biogenesis; lipopolysaccharide biosynthesis. Its function is as follows. Catalyzes the conversion of UDP-4-keto-arabinose (UDP-Ara4O) to UDP-4-amino-4-deoxy-L-arabinose (UDP-L-Ara4N). The modified arabinose is attached to lipid A and is required for resistance to polymyxin and cationic antimicrobial peptides. In Pseudomonas fluorescens (strain ATCC BAA-477 / NRRL B-23932 / Pf-5), this protein is UDP-4-amino-4-deoxy-L-arabinose--oxoglutarate aminotransferase.